The chain runs to 144 residues: Large ribosomal subunit protein uL16 (144 aa).

This sequence belongs to the universal ribosomal protein uL16 family. As to quaternary structure, part of the 50S ribosomal subunit.

In terms of biological role, binds 23S rRNA and is also seen to make contacts with the A and possibly P site tRNAs. This chain is Large ribosomal subunit protein uL16, found in Lacticaseibacillus paracasei (strain ATCC 334 / BCRC 17002 / CCUG 31169 / CIP 107868 / KCTC 3260 / NRRL B-441) (Lactobacillus paracasei).